Here is a 377-residue protein sequence, read N- to C-terminus: Prolargin (377 aa).

The first 21 residues, 1-21 (MRASFFWFLPLLLILASVAQG), serve as a signal peptide directing secretion. The disordered stretch occupies residues 22 to 61 (QPRPKPGIRRKPKPRPTPSFPQPHEPAEPTDLPPPLPPGP). Pro residues-rich tracts occupy residues 36 to 45 (RPTPSFPQPH) and 52 to 61 (DLPPPLPPGP). LRR repeat units lie at residues 90–109 (RKVP…NNFI), 110–133 (TELP…NNRI), 134–157 (RKVD…KNQL), 158–178 (EEVP…QNLI), 179–202 (SRIP…HNRL), 203–228 (SDGV…HNIL), 229–249 (RRMP…SNKI), 250–273 (ETIP…YNKL), 274–298 (SDRG…HNKI), 299–318 (SNVP…NNSI), 319–357 (EKIN…GNFL), and 358–377 (KPPI…SVVI). An N-linked (GlcNAc...) asparagine glycan is attached at N119. N284, N315, and N322 each carry an N-linked (GlcNAc...) asparagine glycan. A disulfide bridge connects residues C327 and C368.

It belongs to the small leucine-rich proteoglycan (SLRP) family. SLRP class II subfamily. As to quaternary structure, binds the basement membrane heparan sulfate proteoglycan perlecan and triple helical collagens type I and type II. In terms of processing, glycosylated; contains heparan sulfate.

The protein resides in the secreted. It localises to the extracellular space. It is found in the extracellular matrix. Its function is as follows. May anchor basement membranes to the underlying connective tissue. The protein is Prolargin (Prelp) of Rattus norvegicus (Rat).